The chain runs to 421 residues: D-amino acid dehydrogenase (421 aa).

3–17 (VLILGSGVIGVTSAY) provides a ligand contact to FAD.

This sequence belongs to the DadA oxidoreductase family. FAD is required as a cofactor.

The catalysed reaction is a D-alpha-amino acid + A + H2O = a 2-oxocarboxylate + AH2 + NH4(+). Oxidative deamination of D-amino acids. This is D-amino acid dehydrogenase from Bradyrhizobium diazoefficiens (strain JCM 10833 / BCRC 13528 / IAM 13628 / NBRC 14792 / USDA 110).